We begin with the raw amino-acid sequence, 234 residues long: Thymidylate kinase (234 aa).

21-28 (GGEGTGKS) is an ATP binding site.

The protein belongs to the thymidylate kinase family.

The catalysed reaction is dTMP + ATP = dTDP + ADP. Phosphorylation of dTMP to form dTDP in both de novo and salvage pathways of dTTP synthesis. The chain is Thymidylate kinase from Rhizobium meliloti (strain 1021) (Ensifer meliloti).